A 333-amino-acid chain; its full sequence is MVINDIESLTAQALADVAAAQNLDHLEFLRVALLGKNGSITLQLKQLGKLPVEQRKAIGEKLNRVRDLISAALMDRKAALESAALSKRLIDERVDVTLPGRRGERGGLHPVTRTLERITEIFARLGYELVEGPEIEDDWHNFEALNFPLHHPARAMHDTFYFGDGRLLRTHTSGVQVRYMSDHRPPLRMIAAGKVYRSDSDQTHSPMFHQIEGLLLDKHATFVDLKGTLSEFLRAFFERDFEVRFRPSYFPFVEPGAEVDIAWQQSDSSVRWLEVLGCGMVHPNVLKNVGIDSECYTGFAFGLGVERFAMLRYGVDDLRAFFENDVRFLRQFS.

Glutamate 254 provides a ligand contact to Mg(2+).

This sequence belongs to the class-II aminoacyl-tRNA synthetase family. Phe-tRNA synthetase alpha subunit type 1 subfamily. Tetramer of two alpha and two beta subunits. The cofactor is Mg(2+).

Its subcellular location is the cytoplasm. The catalysed reaction is tRNA(Phe) + L-phenylalanine + ATP = L-phenylalanyl-tRNA(Phe) + AMP + diphosphate + H(+). This Xylella fastidiosa (strain M12) protein is Phenylalanine--tRNA ligase alpha subunit.